The chain runs to 270 residues: Elongation factor Ts (270 aa).

The tract at residues 76–79 (TDFV) is involved in Mg(2+) ion dislocation from EF-Tu.

This sequence belongs to the EF-Ts family.

The protein localises to the cytoplasm. Its function is as follows. Associates with the EF-Tu.GDP complex and induces the exchange of GDP to GTP. It remains bound to the aminoacyl-tRNA.EF-Tu.GTP complex up to the GTP hydrolysis stage on the ribosome. The protein is Elongation factor Ts of Corynebacterium aurimucosum (strain ATCC 700975 / DSM 44827 / CIP 107346 / CN-1) (Corynebacterium nigricans).